The following is a 345-amino-acid chain: Mitochondrial metalloendopeptidase OMA1 (345 aa).

Topologically, residues 1-67 are mitochondrial matrix; it reads MLRNIIRFKG…ILLDKSSRKY (67 aa). The chain crosses the membrane as a helical span at residues 68–88; the sequence is LALLFGGCSLFYYTHLDKAPV. Residues 89–345 lie on the Mitochondrial intermembrane side of the membrane; the sequence is SDRSRFIWVS…GNYYKSFFSM (257 aa). Histidine 203 is a Zn(2+) binding site. Glutamate 204 is an active-site residue. 2 residues coordinate Zn(2+): histidine 207 and glutamate 257. Cysteine 272 and cysteine 332 are joined by a disulfide. The interval 314–345 is required for protease activation; that stretch reads ENMSKWLPKANEIYEQSDCSSMGNYYKSFFSM.

Belongs to the peptidase M48 family. Homooligomer. It depends on Zn(2+) as a cofactor. In terms of processing, forms a redox-dependent disulfide bond, which plays a structural role and regulates its conformational stability and activity.

The protein localises to the mitochondrion inner membrane. With respect to regulation, protease activity is induced in response to various mitochondrial stress, such as changes in membrane potential, oxidative stress or chronic hyperpolarization, and depends on its C-terminal region. Protease that is part of the quality control system in the inner membrane of mitochondria. Activated in response to various mitochondrial stress, leading to the proteolytic cleavage of target proteins, such as OXA1 and COX1. Cleaves and thereby promotes the turnover of mistranslated or misfolded membrane proteins. Cleaves the misfolded multi-pass membrane protein OXA1. Involved in quality control of cytochrome oxidase assembly: mediates the cleavage of COX1 in cells lacking COA2. Required for the stability of the respiratory supercomplexes. Required for TOR signaling. This Saccharomyces cerevisiae (strain ATCC 204508 / S288c) (Baker's yeast) protein is Mitochondrial metalloendopeptidase OMA1.